The primary structure comprises 307 residues: N-acetylmuramic acid 6-phosphate etherase (307 aa).

The SIS domain maps to Thr-59 to Lys-222. Glu-87 (proton donor) is an active-site residue. Residue Glu-118 is part of the active site.

The protein belongs to the GCKR-like family. MurNAc-6-P etherase subfamily. Homodimer.

It catalyses the reaction N-acetyl-D-muramate 6-phosphate + H2O = N-acetyl-D-glucosamine 6-phosphate + (R)-lactate. It participates in amino-sugar metabolism; N-acetylmuramate degradation. Functionally, specifically catalyzes the cleavage of the D-lactyl ether substituent of MurNAc 6-phosphate, producing GlcNAc 6-phosphate and D-lactate. This is N-acetylmuramic acid 6-phosphate etherase from Trichormus variabilis (strain ATCC 29413 / PCC 7937) (Anabaena variabilis).